Reading from the N-terminus, the 725-residue chain is Polyribonucleotide nucleotidyltransferase (725 aa).

Mg(2+) is bound by residues Asp-487 and Asp-493. Positions 554 to 613 (PRIETMQIPTDKIREVIGTGGKVIREIVEKTGAKIDIQDTGVVKIASSDGKAIKAAYNWI) constitute a KH domain. In terms of domain architecture, S1 motif spans 623–691 (GMIYDGTVVK…ERGKIRLSMK (69 aa)). Positions 699 to 725 (EDLTEKLKAEREADRNRERQARQSAGE) are disordered. Positions 701 to 719 (LTEKLKAEREADRNRERQA) are enriched in basic and acidic residues.

This sequence belongs to the polyribonucleotide nucleotidyltransferase family. The cofactor is Mg(2+).

It localises to the cytoplasm. The enzyme catalyses RNA(n+1) + phosphate = RNA(n) + a ribonucleoside 5'-diphosphate. Its function is as follows. Involved in mRNA degradation. Catalyzes the phosphorolysis of single-stranded polyribonucleotides processively in the 3'- to 5'-direction. In Methylobacterium sp. (strain 4-46), this protein is Polyribonucleotide nucleotidyltransferase.